Here is a 459-residue protein sequence, read N- to C-terminus: MLKKTAPNSPKRRRCSSFAAVDLVGSANRTFMVSVSLPKELILEILKRLPAKSVKRFHCVSKQWASMLSCPHFRELFLTRSSSAQPRLLFAIEKHNQWSLFSLPQRLTPYEKSSSSSVVVTPEFHMKFPPDGMLIYPRHDRRFSFGYASGLMYFYGMWINEHDYDGVPVICNPLTGRYASLPFLERYRKAFSFFGFDPIEKQYKVLFMAYPSGPDHHTVLTFGTGEMSWRKIECSVKHDIVSDGICINGVMYYLGDTSEFMTAFVVVCFDVRSETFSFIYPGSYCEVINYKGKLGLVFCDDYTDDAIELRLWVLEDKEKIEWSKYAYKLKDEKFSAHYVSIVGVSAAGEIVLSMADFTSKQPFYVFYYNPERNTLQCTEIQGFEEHHGTFDRRSRVRVFVDDCSSFYRFADHVEYLNVDEPKLLKSKIYDGPNAKIEWEEEEEEDEDEDQEKEEEDQWS.

In terms of domain architecture, F-box spans 31–76; it reads FMVSVSLPKELILEILKRLPAKSVKRFHCVSKQWASMLSCPHFREL. The disordered stretch occupies residues 434 to 459; sequence AKIEWEEEEEEDEDEDQEKEEEDQWS. The span at 438–459 shows a compositional bias: acidic residues; it reads WEEEEEEDEDEDQEKEEEDQWS.

The polypeptide is F-box protein At1g47340 (Arabidopsis thaliana (Mouse-ear cress)).